The chain runs to 699 residues: DNA ligase (699 aa).

A disordered region spans residues 1–29 (MSDADVDAESNPYLRDPPTEFEPAESLSR). NAD(+)-binding positions include 60–64 (DAAYD), 108–109 (SI), and E137. Residue K139 is the N6-AMP-lysine intermediate of the active site. Residues R160, E196, K311, and K335 each coordinate NAD(+). Positions 425, 428, 441, and 447 each coordinate Zn(2+). Residues 613–666 (SGGDELDGLTFVVTGTLAASRSDVTELVESHGGNVTGSVSGNTDYLVVGENPGR) enclose the BRCT domain.

This sequence belongs to the NAD-dependent DNA ligase family. LigA subfamily. Mg(2+) is required as a cofactor. Mn(2+) serves as cofactor.

The enzyme catalyses NAD(+) + (deoxyribonucleotide)n-3'-hydroxyl + 5'-phospho-(deoxyribonucleotide)m = (deoxyribonucleotide)n+m + AMP + beta-nicotinamide D-nucleotide.. Its activity is regulated as follows. Displays maximal in vitro activity at high salt levels. In terms of biological role, DNA ligase that catalyzes the formation of phosphodiester linkages between 5'-phosphoryl and 3'-hydroxyl groups in double-stranded DNA using NAD as a coenzyme and as the energy source for the reaction. It is essential for DNA replication and repair of damaged DNA. This chain is DNA ligase, found in Haloferax volcanii (strain ATCC 29605 / DSM 3757 / JCM 8879 / NBRC 14742 / NCIMB 2012 / VKM B-1768 / DS2) (Halobacterium volcanii).